Reading from the N-terminus, the 485-residue chain is Zinc finger protein 639 (485 aa).

Positions 1–14 (MNEYPKKRKRKTLH) are enriched in basic residues. Disordered regions lie at residues 1 to 23 (MNEY…DSSG) and 54 to 80 (DNKD…ARNR). Ser-60 is subject to Phosphoserine. Residue Lys-76 forms a Glycyl lysine isopeptide (Lys-Gly) (interchain with G-Cter in SUMO2) linkage. Ser-88 is modified (phosphoserine). The disordered stretch occupies residues 115-136 (ASPESVHQHTQEESPIEVHTSE). Glycyl lysine isopeptide (Lys-Gly) (interchain with G-Cter in SUMO2) cross-links involve residues Lys-177, Lys-181, and Lys-226. 8 consecutive C2H2-type zinc fingers follow at residues 204 to 227 (YKCE…ILKH), 233 to 255 (NVCR…AKLH), 260 to 283 (YICK…ADTH), 289 to 311 (YWCE…FQEH), 374 to 397 (FVCQ…AIEH), 403 to 425 (HVCD…LNSH), 431 to 454 (YLCQ…DFKH), and 460 to 482 (HKCS…LQVH). The interaction with CTNNA2 stretch occupies residues 371–455 (KNFFVCQVCG…LKIHLDFKHS (85 aa)).

It belongs to the krueppel C2H2-type zinc-finger protein family. In terms of assembly, interacts with CTNNA2.

It is found in the nucleus. Its function is as follows. Binds DNA and may function as a transcriptional repressor. This Mus musculus (Mouse) protein is Zinc finger protein 639 (Znf639).